The following is a 282-amino-acid chain: MASATVVSQIQSLYIIKPRLSPPPPPHRQFRSIYFPTTRLLQQHRFRQMKSVVIVPATAAETARKRYPGESKGFVEEMRFVAMKLHTKDQAKEGEKEVTEPEEKAVTKWEPTVDGYLKFLVDSKVVYDTLEKIVQDATHPSYAEFRNTGLERSASLAKDLEWFKEQGYTIPQPSSPGLNYAQYLRDLSQNDPQAFICHFYNIYFAHSAGGRMIGKKIAGELLNNKGLEFYKWDGDLSQLLQNVRDKLNKVAEQWTREEKNHCLEETEKSFKWSGEILRLILS.

A chloroplast-targeting transit peptide spans 1–56; that stretch reads MASATVVSQIQSLYIIKPRLSPPPPPHRQFRSIYFPTTRLLQQHRFRQMKSVVIVP. His-86 contacts heme b.

This sequence belongs to the heme oxygenase family. As to expression, highly expressed in root nodules and, to a lower extent, in leaves, shoots, roots, flowers and pods (at protein level).

The protein localises to the plastid. Its subcellular location is the chloroplast. The enzyme catalyses heme b + 3 reduced [NADPH--hemoprotein reductase] + 3 O2 = biliverdin IXalpha + CO + Fe(2+) + 3 oxidized [NADPH--hemoprotein reductase] + 3 H2O + H(+). In terms of biological role, key enzyme in the synthesis of the chromophore of the phytochrome family of plant photoreceptors. Catalyzes the opening of the heme ring to form the open-chain tetrapyrrole biliverdin IX with the release of iron and carbon monoxide (CO). Produces specifically the biliverdin IX-alpha isomer. Can form complex with heme, is ferredoxin-dependent and its activity is increased in the presence of ascorbate. May affect the plastid-to-nucleus signaling pathway by perturbing tetrapyrrole synthesis. The plastid-to-nucleus signal plays an important role in the coordinated expression of both nuclear- and chloroplast-localized genes that encode photosynthesis-related proteins. Required for efficient symbiotic nitrogen fixation (SNF) in root nodules. Responsible for heme catabolism in uninfected nodule interstitial cells (UC), preventing superoxide production under stressful conditions (e.g. nitrate exposure and darkness) and catalyzing biliverdin (BV) production in senescing green nodules. In Lotus japonicus (Lotus corniculatus var. japonicus), this protein is Heme oxygenase 1, chloroplastic.